Reading from the N-terminus, the 122-residue chain is Large ribosomal subunit protein uL14 (122 aa).

It belongs to the universal ribosomal protein uL14 family. Part of the 50S ribosomal subunit. Forms a cluster with proteins L3 and L19. In the 70S ribosome, L14 and L19 interact and together make contacts with the 16S rRNA in bridges B5 and B8.

Binds to 23S rRNA. Forms part of two intersubunit bridges in the 70S ribosome. The sequence is that of Large ribosomal subunit protein uL14 from Janthinobacterium sp. (strain Marseille) (Minibacterium massiliensis).